The sequence spans 245 residues: Type II restriction enzyme EcoRV (245 aa).

Residues E45, D74, and D90 each contribute to the Mg(2+) site. Active-site residues include D74, D90, and K92.

As to quaternary structure, homodimer. It depends on Mg(2+) as a cofactor.

It catalyses the reaction Endonucleolytic cleavage of DNA to give specific double-stranded fragments with terminal 5'-phosphates.. In terms of biological role, a P subtype restriction enzyme that recognizes the double-stranded sequence 5'-GATATC-3' and cleaves after T-3. This is Type II restriction enzyme EcoRV (ecoRVR) from Escherichia coli.